The following is a 162-amino-acid chain: Cytochrome c-type biogenesis protein CcmE (162 aa).

Residues 1–8 (MNPVRKKR) lie on the Cytoplasmic side of the membrane. Residues 9 to 29 (LIIVLAIVVGVGAAVGLALSA) traverse the membrane as a helical; Signal-anchor for type II membrane protein segment. The Periplasmic portion of the chain corresponds to 30 to 162 (LQQNINLFYT…GETSYNQEGK (133 aa)). 2 residues coordinate heme: His124 and Tyr128. Residues 139–148 (DSGQLKHYEN) are compositionally biased toward basic and acidic residues. The segment at 139–162 (DSGQLKHYENGKAAGETSYNQEGK) is disordered.

It belongs to the CcmE/CycJ family.

Its subcellular location is the cell inner membrane. Heme chaperone required for the biogenesis of c-type cytochromes. Transiently binds heme delivered by CcmC and transfers the heme to apo-cytochromes in a process facilitated by CcmF and CcmH. In Pseudomonas aeruginosa (strain LESB58), this protein is Cytochrome c-type biogenesis protein CcmE.